Reading from the N-terminus, the 140-residue chain is Large ribosomal subunit protein uL14 (140 aa).

The protein belongs to the universal ribosomal protein uL14 family. As to quaternary structure, part of the 50S ribosomal subunit. Forms a cluster with proteins L3 and L24e, part of which may contact the 16S rRNA in 2 intersubunit bridges.

Functionally, binds to 23S rRNA. Forms part of two intersubunit bridges in the 70S ribosome. The polypeptide is Large ribosomal subunit protein uL14 (Nitrosopumilus maritimus (strain SCM1)).